We begin with the raw amino-acid sequence, 425 residues long: 5-aminovalerate aminotransferase DavT (425 aa).

Residues 112-113, tyrosine 139, and 240-243 each bind pyridoxal 5'-phosphate; these read GS and DEVQ. Lysine 269 carries the N6-(pyridoxal phosphate)lysine modification. Residue threonine 298 coordinates pyridoxal 5'-phosphate.

The protein belongs to the class-III pyridoxal-phosphate-dependent aminotransferase family. The cofactor is pyridoxal 5'-phosphate.

It carries out the reaction 5-aminopentanoate + 2-oxoglutarate = 5-oxopentanoate + L-glutamate. Its function is as follows. Catalyzes the conversion of 5-aminovalerate to 5-oxopentanoate. In Pseudomonas putida (strain ATCC 47054 / DSM 6125 / CFBP 8728 / NCIMB 11950 / KT2440), this protein is 5-aminovalerate aminotransferase DavT (davT).